A 220-amino-acid polypeptide reads, in one-letter code: Deoxyribose-phosphate aldolase (220 aa).

Asp92 (proton donor/acceptor) is an active-site residue. Lys155 serves as the catalytic Schiff-base intermediate with acetaldehyde. Catalysis depends on Lys184, which acts as the Proton donor/acceptor.

It belongs to the DeoC/FbaB aldolase family. DeoC type 1 subfamily.

Its subcellular location is the cytoplasm. The catalysed reaction is 2-deoxy-D-ribose 5-phosphate = D-glyceraldehyde 3-phosphate + acetaldehyde. It participates in carbohydrate degradation; 2-deoxy-D-ribose 1-phosphate degradation; D-glyceraldehyde 3-phosphate and acetaldehyde from 2-deoxy-alpha-D-ribose 1-phosphate: step 2/2. In terms of biological role, catalyzes a reversible aldol reaction between acetaldehyde and D-glyceraldehyde 3-phosphate to generate 2-deoxy-D-ribose 5-phosphate. In Natranaerobius thermophilus (strain ATCC BAA-1301 / DSM 18059 / JW/NM-WN-LF), this protein is Deoxyribose-phosphate aldolase.